A 173-amino-acid polypeptide reads, in one-letter code: Ribosomal RNA large subunit methyltransferase H (173 aa).

Positions 89 and 121 each coordinate S-adenosyl-L-methionine.

Belongs to the RNA methyltransferase RlmH family. Homodimer.

It localises to the cytoplasm. The enzyme catalyses pseudouridine(1915) in 23S rRNA + S-adenosyl-L-methionine = N(3)-methylpseudouridine(1915) in 23S rRNA + S-adenosyl-L-homocysteine + H(+). Functionally, specifically methylates the pseudouridine at position 1915 (m3Psi1915) in 23S rRNA. The polypeptide is Ribosomal RNA large subunit methyltransferase H (Chelativorans sp. (strain BNC1)).